Consider the following 97-residue polypeptide: Coiled-coil domain-containing protein 167 (97 aa).

The stretch at 10–79 (GVALEIDGLE…LRQENRKNML (70 aa)) forms a coiled coil. The chain crosses the membrane as a helical span at residues 77–97 (NMLLSVAIFLLLTVIYAYWAL).

It localises to the membrane. The sequence is that of Coiled-coil domain-containing protein 167 (CCDC167) from Bos taurus (Bovine).